The sequence spans 291 residues: Probable plasmid-partitioning protein ParB (291 aa).

It belongs to the ParB family.

The sequence is that of Probable plasmid-partitioning protein ParB from Deinococcus radiodurans (strain ATCC 13939 / DSM 20539 / JCM 16871 / CCUG 27074 / LMG 4051 / NBRC 15346 / NCIMB 9279 / VKM B-1422 / R1).